Reading from the N-terminus, the 230-residue chain is Orotidine 5'-phosphate decarboxylase (230 aa).

Residues Asp-10, Lys-31, 58-67, Thr-117, Arg-179, Gln-188, Gly-208, and Arg-209 contribute to the substrate site; that span reads DLKLHDIPNT. The active-site Proton donor is the Lys-60. The interval 177–196 is disordered; that stretch reads GIRPKDASSDDQKRITTPED. Residues 179–196 are compositionally biased toward basic and acidic residues; sequence RPKDASSDDQKRITTPED.

This sequence belongs to the OMP decarboxylase family. Type 1 subfamily. Homodimer.

The enzyme catalyses orotidine 5'-phosphate + H(+) = UMP + CO2. The protein operates within pyrimidine metabolism; UMP biosynthesis via de novo pathway; UMP from orotate: step 2/2. Functionally, catalyzes the decarboxylation of orotidine 5'-monophosphate (OMP) to uridine 5'-monophosphate (UMP). The polypeptide is Orotidine 5'-phosphate decarboxylase (Staphylococcus saprophyticus subsp. saprophyticus (strain ATCC 15305 / DSM 20229 / NCIMB 8711 / NCTC 7292 / S-41)).